Here is a 105-residue protein sequence, read N- to C-terminus: Large ribosomal subunit protein bL21 (105 aa).

It belongs to the bacterial ribosomal protein bL21 family. Part of the 50S ribosomal subunit. Contacts protein L20.

Its function is as follows. This protein binds to 23S rRNA in the presence of protein L20. The sequence is that of Large ribosomal subunit protein bL21 from Thermotoga maritima (strain ATCC 43589 / DSM 3109 / JCM 10099 / NBRC 100826 / MSB8).